Consider the following 875-residue polypeptide: Alanine--tRNA ligase (875 aa).

Positions 564, 568, 666, and 670 each coordinate Zn(2+).

This sequence belongs to the class-II aminoacyl-tRNA synthetase family. As to quaternary structure, homotetramer. Requires Zn(2+) as cofactor.

Its subcellular location is the cytoplasm. It carries out the reaction tRNA(Ala) + L-alanine + ATP = L-alanyl-tRNA(Ala) + AMP + diphosphate. Its function is as follows. Catalyzes the attachment of alanine to tRNA(Ala) in a two-step reaction: alanine is first activated by ATP to form Ala-AMP and then transferred to the acceptor end of tRNA(Ala). Also edits incorrectly charged Ser-tRNA(Ala) and Gly-tRNA(Ala) via its editing domain. This Pectobacterium atrosepticum (strain SCRI 1043 / ATCC BAA-672) (Erwinia carotovora subsp. atroseptica) protein is Alanine--tRNA ligase.